Reading from the N-terminus, the 458-residue chain is Fasciclin-like arabinogalactan protein 17 (458 aa).

The signal sequence occupies residues 1-30 (MDRRIYGGSAVIHLFLFFSVLIFSAASALS). The FAS1 1 domain maps to 43–184 (NSNSVLVALL…GLIHGIERLL (142 aa)). Residue Asn80 is glycosylated (N-linked (GlcNAc...) asparagine). The disordered stretch occupies residues 207-262 (PEGAPEVDPRTNRLKKPAAPVPAGSPPALPIQSAMAPGPSLAPAPAPGPGGKQHHF). Over residues 225-235 (APVPAGSPPAL) the composition is skewed to pro residues. The 144-residue stretch at 268–411 (VKDFIHTLLH…ISVQGIDGVL (144 aa)) folds into the FAS1 2 domain. Residue Asn290 is glycosylated (N-linked (GlcNAc...) asparagine).

The protein belongs to the fasciclin-like AGP family.

It localises to the secreted. Its function is as follows. May be a cell surface adhesion protein. The sequence is that of Fasciclin-like arabinogalactan protein 17 (FLA17) from Arabidopsis thaliana (Mouse-ear cress).